Reading from the N-terminus, the 260-residue chain is Adenosylcobinamide-GDP ribazoletransferase (260 aa).

6 consecutive transmembrane segments (helical) span residues 43–63, 64–84, 117–137, 143–163, 197–217, and 237–257; these read LVGTLVGLIAALVFYLTQFIF, PASVAVVLAMIATVLLTGGFH, GSLALMLALLLKFQLLSELAL, VAGGLVLGHTLSRAFAASIIF, VICLLLTGVGATLVILVTLFV, and TLGACQQILELVVYLVLLLLW.

Belongs to the CobS family. Requires Mg(2+) as cofactor.

It localises to the cell inner membrane. It catalyses the reaction alpha-ribazole + adenosylcob(III)inamide-GDP = adenosylcob(III)alamin + GMP + H(+). It carries out the reaction alpha-ribazole 5'-phosphate + adenosylcob(III)inamide-GDP = adenosylcob(III)alamin 5'-phosphate + GMP + H(+). It functions in the pathway cofactor biosynthesis; adenosylcobalamin biosynthesis; adenosylcobalamin from cob(II)yrinate a,c-diamide: step 7/7. Functionally, joins adenosylcobinamide-GDP and alpha-ribazole to generate adenosylcobalamin (Ado-cobalamin). Also synthesizes adenosylcobalamin 5'-phosphate from adenosylcobinamide-GDP and alpha-ribazole 5'-phosphate. The sequence is that of Adenosylcobinamide-GDP ribazoletransferase from Shewanella amazonensis (strain ATCC BAA-1098 / SB2B).